Reading from the N-terminus, the 409-residue chain is Multifunctional CCA protein (409 aa).

Residues G8 and R11 each contribute to the ATP site. Positions 8 and 11 each coordinate CTP. 2 residues coordinate Mg(2+): D21 and D23. Residues R91, R137, and R140 each coordinate ATP. Positions 91, 137, and 140 each coordinate CTP. The 102-residue stretch at 228–329 folds into the HD domain; that stretch reads TGAHTLSVLL…LELLQSFDVF (102 aa).

It belongs to the tRNA nucleotidyltransferase/poly(A) polymerase family. Bacterial CCA-adding enzyme type 1 subfamily. Monomer. Can also form homodimers and oligomers. It depends on Mg(2+) as a cofactor. Requires Ni(2+) as cofactor.

It carries out the reaction a tRNA precursor + 2 CTP + ATP = a tRNA with a 3' CCA end + 3 diphosphate. The catalysed reaction is a tRNA with a 3' CCA end + 2 CTP + ATP = a tRNA with a 3' CCACCA end + 3 diphosphate. Functionally, catalyzes the addition and repair of the essential 3'-terminal CCA sequence in tRNAs without using a nucleic acid template. Adds these three nucleotides in the order of C, C, and A to the tRNA nucleotide-73, using CTP and ATP as substrates and producing inorganic pyrophosphate. tRNA 3'-terminal CCA addition is required both for tRNA processing and repair. Also involved in tRNA surveillance by mediating tandem CCA addition to generate a CCACCA at the 3' terminus of unstable tRNAs. While stable tRNAs receive only 3'-terminal CCA, unstable tRNAs are marked with CCACCA and rapidly degraded. This Pseudomonas fluorescens (strain ATCC BAA-477 / NRRL B-23932 / Pf-5) protein is Multifunctional CCA protein.